A 279-amino-acid polypeptide reads, in one-letter code: Zinc finger CCCH domain-containing protein 1 (279 aa).

Residues 20–45 (DVIVLSPGPPARRRPPPVKAVEPESG) are disordered. 2 consecutive C3H1-type zinc fingers follow at residues 56 to 84 (FYKT…HGDE) and 139 to 167 (RAIT…HVSA).

The protein is Zinc finger CCCH domain-containing protein 1 of Oryza sativa subsp. japonica (Rice).